Reading from the N-terminus, the 513-residue chain is Pantetheinase (513 aa).

The first 22 residues, Met-1–Ser-22, serve as a signal peptide directing secretion. Residues Ala-40–Ser-307 enclose the CN hydrolase domain. Catalysis depends on Glu-80, which acts as the Proton acceptor. An N-linked (GlcNAc...) asparagine glycan is attached at Asn-147. Lys-179 serves as the catalytic Proton donor. Cys-212 acts as the Nucleophile in catalysis. 2 N-linked (GlcNAc...) asparagine glycosylation sites follow: Asn-315 and Asn-353. Residue Gly-487 is the site of GPI-anchor amidated glycine attachment. The propeptide at Ala-488–Trp-513 is removed in mature form.

Belongs to the carbon-nitrogen hydrolase superfamily. BTD/VNN family. As to quaternary structure, monomer. In terms of tissue distribution, detected in kidney (at protein level).

It localises to the cell membrane. The enzyme catalyses (R)-pantetheine + H2O = cysteamine + (R)-pantothenate. In terms of biological role, amidohydrolase that hydrolyzes specifically one of the carboamide linkages in D-pantetheine thus recycling pantothenic acid (vitamin B5) and releasing cysteamine. This Sus scrofa (Pig) protein is Pantetheinase (VNN1).